The primary structure comprises 144 residues: MSDKQQQKHKQKARQARVKAQINRDKARRNLLRQREKLARRRTRNRKQSEPRRDDSDGDDTDGETVKNPAAHSTMPPQKSNAENAVRNSHSTVPKTPKYSDVTARERLYGQRLHQKTAGGNSEASAPSDESASGSPTEDEVNDE.

The segment at 1-144 (MSDKQQQKHK…SPTEDEVNDE (144 aa)) is disordered. 2 stretches are compositionally biased toward basic residues: residues 7 to 17 (QKHKQKARQAR) and 26 to 46 (KARRNLLRQREKLARRRTRNR). Polar residues predominate over residues 75 to 94 (MPPQKSNAENAVRNSHSTVP). Positions 122 to 136 (SEASAPSDESASGSP) are enriched in low complexity.

Belongs to the gas vesicle GvpI family. GvpF to GvpM interact with each other in vitro, and may form multi-subunit complex(es). Interacts with GvpC1 and GvpO.

It localises to the gas vesicle. Proteins GvpF to GvpM might be involved in nucleating gas vesicle formation. A minor component of the gas vesicle. Gas vesicles are hollow, gas filled proteinaceous nanostructures found in several microbial planktonic microorganisms. They allow positioning of halobacteria at the optimal depth for growth in the poorly aerated, shallow brine pools of their habitat. Its function is as follows. Expression of a 9.5 kb p-vac DNA fragment containing 2 divergently transcribed regions (gvpD-gvpE-gvpF-gvpG-gvpH-gvpI-gvpJ-gvpK-gvpL-gvpM and gvpA-gvpC-gvpN-gvpO) allows H.volcanii to produce gas vesicles. A similar region restores gas vesicle production in H.halobium without the p-vac locus, but it still has the c-vac locus. The chain is Gas vesicle protein I1 (gvpI11) from Halobacterium salinarum (strain ATCC 700922 / JCM 11081 / NRC-1) (Halobacterium halobium).